A 101-amino-acid polypeptide reads, in one-letter code: Urease subunit beta (101 aa).

The protein belongs to the urease beta subunit family. In terms of assembly, heterotrimer of UreA (gamma), UreB (beta) and UreC (alpha) subunits. Three heterotrimers associate to form the active enzyme.

The protein localises to the cytoplasm. The catalysed reaction is urea + 2 H2O + H(+) = hydrogencarbonate + 2 NH4(+). It participates in nitrogen metabolism; urea degradation; CO(2) and NH(3) from urea (urease route): step 1/1. In Burkholderia ambifaria (strain ATCC BAA-244 / DSM 16087 / CCUG 44356 / LMG 19182 / AMMD) (Burkholderia cepacia (strain AMMD)), this protein is Urease subunit beta.